A 602-amino-acid polypeptide reads, in one-letter code: Sodium- and chloride-dependent GABA transporter 2 (602 aa).

Residues 1–40 (MENRASGTTSNGETKPVCPAMEKVEEDGTLEREHWNNKME) lie on the Cytoplasmic side of the membrane. The next 3 helical transmembrane spans lie at 41–61 (FVLS…FPYL), 68–88 (GAFF…VFFL), and 121–141 (IVSL…FYLF). Residues 142–206 (SSFTTDLPWG…GIQHLGSLRW (65 aa)) are Extracellular-facing. Residues Cys-153 and Cys-162 are joined by a disulfide bond. N-linked (GlcNAc...) asparagine glycans are attached at residues Asn-169, Asn-173, and Asn-178. The next 2 membrane-spanning stretches (helical) occupy residues 207–227 (ELVL…WKGV) and 233–253 (VVYF…IRGV). Asn-269 carries an N-linked (GlcNAc...) asparagine glycan. The next 7 helical transmembrane spans lie at 282–302 (AGTQ…ALGS), 319–339 (ILNS…LGFM), 366–386 (VVML…VVLL), 418–438 (VLIL…LTEG), 453–473 (GMCL…VYGA), 490–510 (PLIK…TFLF), and 528–548 (WWGD…IPAW). At 549-602 (SIYKLRTLKGPLRERLRQLVCPAEDLPQKNQPEPTAPATPMTSLLRLTELESNC) the chain is on the cytoplasmic side. Position 587 is a phosphothreonine (Thr-587). The residue at position 591 (Ser-591) is a Phosphoserine.

The protein belongs to the sodium:neurotransmitter symporter (SNF) (TC 2.A.22) family. SLC6A13 subfamily. Expressed at high levels in liver, followed by kidney and leptomeninges, and very low levels in the cerebellum (at protein level). In the brain, detected in some blood vessels (at protein level). In the kidney, expressed in the cortex, including parts of the proximal tubules, but not in the medulla (at protein level). In the liver, highest expression in periportal hepatocytes, with highest density at the vascular side (at protein level). Also detected at low levels in other organs, including skeletal muscle.

The protein localises to the cell membrane. It is found in the basolateral cell membrane. The catalysed reaction is 4-aminobutanoate(out) + chloride(out) + 2 Na(+)(out) = 4-aminobutanoate(in) + chloride(in) + 2 Na(+)(in). It carries out the reaction taurine(out) + chloride(out) + 2 Na(+)(out) = taurine(in) + chloride(in) + 2 Na(+)(in). The enzyme catalyses beta-alanine(out) + chloride(out) + 2 Na(+)(out) = beta-alanine(in) + chloride(in) + 2 Na(+)(in). It catalyses the reaction hypotaurine(out) + chloride(out) + 2 Na(+)(out) = hypotaurine(in) + chloride(in) + 2 Na(+)(in). Its activity is regulated as follows. Gamma-aminobutyric acid (GABA) transport is inhibited by beta-alanine, taurine, hypotaurine, beta-guanidinopropionic acid, 2,3-diaminopropionic acid, guvacine and nipecotic acid. Beta-alanine transport is inhibited by GABA. Taurine transport is inhibited by GABA, beta-alanine, SNAP-5114, nigericin, nipecotic acid and ouabain. Mediates sodium- and chloride-dependent transport of gamma-aminobutyric acid (GABA). Can also mediate transport of beta-alanine, taurine and hypotaurine and is the major taurine transporter in hepatocytes. The chain is Sodium- and chloride-dependent GABA transporter 2 (Slc6a13) from Mus musculus (Mouse).